We begin with the raw amino-acid sequence, 1032 residues long: FACT complex subunit ctc-2 (1032 aa).

Positions 446-513 are disordered; the sequence is DEEEAQPTPK…QKEGLAKYAE (68 aa). Positions 476–508 are enriched in basic and acidic residues; it reads LRSERNTTVDEDADKRRREHQKELAQKKQKEGL. 4 coiled-coil regions span residues 485–506, 624–658, 785–805, and 949–1010; these read DEDA…KQKE, DRYA…EQDK, RRRR…IAEA, and EVEE…RKAK. The interval 943–1032 is disordered; it reads NDSDDDEVEE…ERAAPKKRRK (90 aa). Composition is skewed to acidic residues over residues 944-979 and 986-1004; these read DSDD…DSEY and EASD…DWDE.

The protein belongs to the peptidase M24 family. SPT16 subfamily. Forms a stable heterodimer with ctc-1/pob3. The dimer of ctc-1 and ctc-2 weakly associates with multiple molecules of nhp-1/nhp6 to form the FACT complex.

It is found in the nucleus. It localises to the chromosome. Its function is as follows. Component of the FACT complex, a general chromatin factor that acts to reorganize nucleosomes. The FACT complex is involved in multiple processes that require DNA as a template such as mRNA elongation, DNA replication and DNA repair. During transcription elongation the FACT complex acts as a histone chaperone that both destabilizes and restores nucleosomal structure. It facilitates the passage of RNA polymerase II and transcription by promoting the dissociation of one histone H2A-H2B dimer from the nucleosome, then subsequently promotes the reestablishment of the nucleosome following the passage of RNA polymerase II. This chain is FACT complex subunit ctc-2 (ctc-2), found in Neurospora crassa (strain ATCC 24698 / 74-OR23-1A / CBS 708.71 / DSM 1257 / FGSC 987).